The primary structure comprises 243 residues: uncharacterized protein (243 aa).

An N-terminal signal peptide occupies residues 1–16 (MKHFIILFLLLFVTAG). A lipid anchor (N-palmitoyl cysteine) is attached at Cys-17. Cys-17 carries the S-diacylglycerol cysteine lipid modification.

It localises to the cell membrane. This is an uncharacterized protein from Bacillus subtilis (strain 168).